The sequence spans 212 residues: ATP-dependent Clp protease proteolytic subunit (212 aa).

The Nucleophile role is filled by serine 109. Histidine 134 is an active-site residue.

This sequence belongs to the peptidase S14 family. As to quaternary structure, fourteen ClpP subunits assemble into 2 heptameric rings which stack back to back to give a disk-like structure with a central cavity, resembling the structure of eukaryotic proteasomes.

It is found in the cytoplasm. It carries out the reaction Hydrolysis of proteins to small peptides in the presence of ATP and magnesium. alpha-casein is the usual test substrate. In the absence of ATP, only oligopeptides shorter than five residues are hydrolyzed (such as succinyl-Leu-Tyr-|-NHMec, and Leu-Tyr-Leu-|-Tyr-Trp, in which cleavage of the -Tyr-|-Leu- and -Tyr-|-Trp bonds also occurs).. Its function is as follows. Cleaves peptides in various proteins in a process that requires ATP hydrolysis. Has a chymotrypsin-like activity. Plays a major role in the degradation of misfolded proteins. This chain is ATP-dependent Clp protease proteolytic subunit, found in Bdellovibrio bacteriovorus (strain ATCC 15356 / DSM 50701 / NCIMB 9529 / HD100).